A 433-amino-acid polypeptide reads, in one-letter code: Xylose isomerase (433 aa).

Catalysis depends on residues His-99 and Asp-102. 7 residues coordinate Mg(2+): Glu-230, Glu-266, His-269, Asp-294, Asp-305, Asp-307, and Asp-337.

It belongs to the xylose isomerase family. Homotetramer. Requires Mg(2+) as cofactor.

It is found in the cytoplasm. The catalysed reaction is alpha-D-xylose = alpha-D-xylulofuranose. The sequence is that of Xylose isomerase from Roseobacter denitrificans (strain ATCC 33942 / OCh 114) (Erythrobacter sp. (strain OCh 114)).